The sequence spans 249 residues: Probable transcriptional regulatory protein Dtur_1615 (249 aa).

Belongs to the TACO1 family.

The protein localises to the cytoplasm. The polypeptide is Probable transcriptional regulatory protein Dtur_1615 (Dictyoglomus turgidum (strain DSM 6724 / Z-1310)).